The chain runs to 1293 residues: DNA-directed RNA polymerase subunit beta' (1293 aa).

Positions 60, 62, 75, and 78 each coordinate Zn(2+). The Mg(2+) site is built by D535, D537, and D539. Zn(2+)-binding residues include C873, C950, C957, and C960.

This sequence belongs to the RNA polymerase beta' chain family. The RNAP catalytic core consists of 2 alpha, 1 beta, 1 beta' and 1 omega subunit. When a sigma factor is associated with the core the holoenzyme is formed, which can initiate transcription. It depends on Mg(2+) as a cofactor. The cofactor is Zn(2+).

It carries out the reaction RNA(n) + a ribonucleoside 5'-triphosphate = RNA(n+1) + diphosphate. In terms of biological role, DNA-dependent RNA polymerase catalyzes the transcription of DNA into RNA using the four ribonucleoside triphosphates as substrates. In Cutibacterium acnes (strain DSM 16379 / KPA171202) (Propionibacterium acnes), this protein is DNA-directed RNA polymerase subunit beta'.